The sequence spans 318 residues: Olfactory receptor 2T3 (318 aa).

At 1-30 (MCSGNQTSQNQTASTDFTLTGLFAESKHAA) the chain is on the extracellular side. 2 N-linked (GlcNAc...) asparagine glycosylation sites follow: N5 and N10. Residues 31–54 (LLYTVTFLLFLMALTGNALLILLI) traverse the membrane as a helical segment. Over 55–62 (HSEPRLHT) the chain is Cytoplasmic. A helical transmembrane segment spans residues 63-84 (PMYFFISQLALMDLMYLCVTVP). The Extracellular segment spans residues 85 to 105 (KMLVGQVTGDDTISPSGCGIQ). A disulfide bond links C102 and C194. A helical transmembrane segment spans residues 106–125 (MFFYLTLAGAEVFLLAAMAY). Residues 126-144 (DRYAAVCRPLHYPLLMNQR) lie on the Cytoplasmic side of the membrane. The helical transmembrane segment at 145 to 163 (VCQLLVSACWVLGMVDGLL) threads the bilayer. Topologically, residues 164–200 (LTPITMSFPFCQSRKILSFFCETPALLKLSCSDVSLY) are extracellular. The helical transmembrane segment at 201–224 (KTLMYLCCILMLLAPIMVISSSYT) threads the bilayer. Residues 225 to 241 (LILHLIHRMNSAAGHRK) lie on the Cytoplasmic side of the membrane. Residues 242 to 264 (ALATCSSHMIIVLLLFGASFYTY) form a helical membrane-spanning segment. Over 265 to 277 (MLPSSYHTAEQDM) the chain is Extracellular. The helical transmembrane segment at 278-297 (MVSAFYTIFTPVLNPLIYSL) threads the bilayer. Residues 298-318 (RNKDVTRALRSMMQSRMNQEK) lie on the Cytoplasmic side of the membrane.

The protein belongs to the G-protein coupled receptor 1 family.

It is found in the cell membrane. Functionally, odorant receptor. In Homo sapiens (Human), this protein is Olfactory receptor 2T3 (OR2T3).